Here is a 374-residue protein sequence, read N- to C-terminus: 12-oxophytodienoate reductase 2 (374 aa).

N-acetylmethionine is present on methionine 1. FMN-binding positions include 33-35, alanine 66, and glutamine 108; that span reads PLT. Histidine 185 lines the substrate pocket. Tyrosine 190 serves as the catalytic Proton donor. Arginine 237 serves as a coordination point for FMN. Residue arginine 277 participates in substrate binding. Residues 305 to 307 and 328 to 329 each bind FMN; these read AGG and GR.

It belongs to the NADH:flavin oxidoreductase/NADH oxidase family. Requires FMN as cofactor. Expressed at highest levels in roots and cotyledons, and at lower levels in leaves, shoots and flowers (sepals, petals, maturing siliques and developing pollen).

The protein localises to the cytoplasm. It carries out the reaction (1S,2S)-OPC-8 + NADP(+) = (9S,13S,15Z)-12-oxophyto-10,15-dienoate + NADPH + H(+). It catalyses the reaction a 4,5-didehydrojasmonate + NADPH + H(+) = a jasmonate + NADP(+). It functions in the pathway lipid metabolism; oxylipin biosynthesis. In terms of biological role, specifically cleaves olefinic bonds in alpha,beta-unsaturated carbonyls and may be involved in detoxification or modification of these reactive compounds. May be involved in the biosynthesis or metabolism of oxylipin signaling molecules. In vitro, reduces 9R,13R-12-oxophytodienoic acid (9R,13R-OPDA) to 9R,13R-OPC-8:0, but only poorly 9S,13S-OPDA, the natural precursor of jasmonic acid (JA). Can detoxify the explosive 2,4,6-trinitrotoluene (TNT) in vitro and in vivo by catalyzing its nitroreduction to form hydroxylamino-dinitrotoluene (HADNT). Functions in an alternative and OPR3-independent pathway for JA biosynthesis. Catalyzes the NADPH-dependent reduction of 4,5-didehydrojasmonates to jasmonates. The chain is 12-oxophytodienoate reductase 2 from Arabidopsis thaliana (Mouse-ear cress).